The sequence spans 1044 residues: Probable translation initiation factor IF-2 (1044 aa).

Positions 173-265 (FAGTIFGREN…LSLILLRLGI (93 aa)) constitute a DOD-type homing endonuclease domain. The tr-type G domain occupies 451–668 (TTETHNFIAN…LIAGLSQKYL (218 aa)). GTP contacts are provided by residues 524-528 (DTPGH) and 578-581 (NKID).

Belongs to the TRAFAC class translation factor GTPase superfamily. Classic translation factor GTPase family. IF-2 subfamily. This protein undergoes a protein self splicing that involves a post-translational excision of the intervening region (intein) followed by peptide ligation.

Function in general translation initiation by promoting the binding of the formylmethionine-tRNA to ribosomes. Seems to function along with eIF-2. This chain is Probable translation initiation factor IF-2 (infB), found in Pyrococcus horikoshii (strain ATCC 700860 / DSM 12428 / JCM 9974 / NBRC 100139 / OT-3).